The primary structure comprises 176 residues: N-alpha-acetyltransferase 30 (176 aa).

Positions 3-159 (IVYKPLDIRN…DAFKLILPLT (157 aa)) constitute an N-acetyltransferase domain.

Belongs to the acetyltransferase family. MAK3 subfamily. In terms of assembly, component of the N-terminal acetyltransferase C (NatC) complex, which is composed of MAK3, MAK10 and MAK31.

It localises to the cytoplasm. The protein localises to the nucleus. The enzyme catalyses N-terminal L-methionyl-L-leucyl-[protein] + acetyl-CoA = N-terminal N(alpha)-acetyl-L-methionyl-L-leucyl-[protein] + CoA + H(+). It catalyses the reaction N-terminal L-methionyl-L-isoleucyl-[protein] + acetyl-CoA = N-terminal N(alpha)-acetyl-L-methionyl-L-isoleucyl-[protein] + CoA + H(+). It carries out the reaction N-terminal L-methionyl-L-phenylalanyl-[protein] + acetyl-CoA = N-terminal N(alpha)-acetyl-L-methionyl-L-phenylalanyl-[protein] + CoA + H(+). The catalysed reaction is N-terminal L-methionyl-L-tryptophyl-[protein] + acetyl-CoA = N-terminal N(alpha)-acetyl-L-methionyl-L-tryptophyl-[protein] + CoA + H(+). The enzyme catalyses N-terminal L-methionyl-L-tyrosyl-[protein] + acetyl-CoA = N-terminal N(alpha)-acetyl-L-methionyl-L-tyrosyl-[protein] + CoA + H(+). Catalytic component of the NatC N-terminal acetyltransferase, which catalyzes acetylation of the N-terminus Met of L-A virus GAG protein and possibly GRH1. The protein is N-alpha-acetyltransferase 30 (MAK3) of Saccharomyces cerevisiae (strain ATCC 204508 / S288c) (Baker's yeast).